A 1242-amino-acid chain; its full sequence is DNA polymerase catalytic subunit (1242 aa).

Disordered stretches follow at residues 14-38 (GAVA…RPPQ), 644-665 (LQSA…SSSS), and 1109-1162 (APQG…RKPP). Residues 653-665 (GVSPGSGSNSSSS) show a composition bias toward low complexity. Positions 1111–1125 (QGSSDNGDSVTTGVV) are enriched in polar residues. A compositionally biased stretch (basic and acidic residues) spans 1145–1155 (ESNRRGGEPAK).

This sequence belongs to the DNA polymerase type-B family. In terms of assembly, forms a complex with the ssDNA-binding protein UL57, the DNA polymerase processivity factor UL44, and the alkaline exonuclease UL98. Interacts with the putative helicase-primase complex composed of UL70, UL102 and UL105 proteins; these interactions may coordinate leading and lagging strand DNA synthesis at the replication fork.

Its subcellular location is the host nucleus. It carries out the reaction DNA(n) + a 2'-deoxyribonucleoside 5'-triphosphate = DNA(n+1) + diphosphate. Functionally, replicates viral genomic DNA in the late phase of lytic infection, producing long concatemeric DNA. The replication complex is composed of six viral proteins: the DNA polymerase, processivity factor, primase, primase-associated factor, helicase, and ssDNA-binding protein. In Homo sapiens (Human), this protein is DNA polymerase catalytic subunit (UL54).